Reading from the N-terminus, the 402-residue chain is Formate-dependent phosphoribosylglycinamide formyltransferase (402 aa).

Residues E25–L26 and E85 contribute to the N(1)-(5-phospho-beta-D-ribosyl)glycinamide site. Residues R118, K159, S164 to Q169, E199 to V202, and E207 each bind ATP. One can recognise an ATP-grasp domain in the interval R123–L318. Positions 277 and 289 each coordinate Mg(2+). N(1)-(5-phospho-beta-D-ribosyl)glycinamide-binding positions include D296, K365, and R372–R373.

It belongs to the PurK/PurT family. In terms of assembly, homodimer.

It catalyses the reaction N(1)-(5-phospho-beta-D-ribosyl)glycinamide + formate + ATP = N(2)-formyl-N(1)-(5-phospho-beta-D-ribosyl)glycinamide + ADP + phosphate + H(+). The protein operates within purine metabolism; IMP biosynthesis via de novo pathway; N(2)-formyl-N(1)-(5-phospho-D-ribosyl)glycinamide from N(1)-(5-phospho-D-ribosyl)glycinamide (formate route): step 1/1. Functionally, involved in the de novo purine biosynthesis. Catalyzes the transfer of formate to 5-phospho-ribosyl-glycinamide (GAR), producing 5-phospho-ribosyl-N-formylglycinamide (FGAR). Formate is provided by PurU via hydrolysis of 10-formyl-tetrahydrofolate. The sequence is that of Formate-dependent phosphoribosylglycinamide formyltransferase from Corynebacterium efficiens (strain DSM 44549 / YS-314 / AJ 12310 / JCM 11189 / NBRC 100395).